We begin with the raw amino-acid sequence, 372 residues long: Maltose/maltodextrin import ATP-binding protein MalK (372 aa).

An ABC transporter domain is found at 4–234 (VTLKNVCKAY…PQNRFVAGFI (231 aa)). 36-43 (GPSGCGKS) is a binding site for ATP.

The protein belongs to the ABC transporter superfamily. Maltooligosaccharide importer (TC 3.A.1.1.1) family. In terms of assembly, the complex is composed of two ATP-binding proteins (MalK), two transmembrane proteins (MalG and MalK) and a solute-binding protein (MalE).

It localises to the cell inner membrane. It catalyses the reaction D-maltose(out) + ATP + H2O = D-maltose(in) + ADP + phosphate + H(+). In terms of biological role, part of the ABC transporter complex MalEFGK involved in maltose/maltodextrin import. Responsible for energy coupling to the transport system. This Vibrio parahaemolyticus serotype O3:K6 (strain RIMD 2210633) protein is Maltose/maltodextrin import ATP-binding protein MalK.